Reading from the N-terminus, the 201-residue chain is Dephospho-CoA kinase (201 aa).

The 198-residue stretch at 4-201 (AFFVTASIAC…VIQEISKGNM (198 aa)) folds into the DPCK domain. 12–17 (ACGKST) serves as a coordination point for ATP.

This sequence belongs to the CoaE family.

Its subcellular location is the cytoplasm. The catalysed reaction is 3'-dephospho-CoA + ATP = ADP + CoA + H(+). The protein operates within cofactor biosynthesis; coenzyme A biosynthesis; CoA from (R)-pantothenate: step 5/5. Catalyzes the phosphorylation of the 3'-hydroxyl group of dephosphocoenzyme A to form coenzyme A. This is Dephospho-CoA kinase from Campylobacter jejuni subsp. jejuni serotype O:2 (strain ATCC 700819 / NCTC 11168).